The primary structure comprises 243 residues: UPF0246 protein MGAS10750_Spy1880 (243 aa).

The protein belongs to the UPF0246 family.

In Streptococcus pyogenes serotype M4 (strain MGAS10750), this protein is UPF0246 protein MGAS10750_Spy1880.